Reading from the N-terminus, the 237-residue chain is MKYTRVLLKLSGEALMGSQGYGIDPEIVHSIAEDVAKVVASGTQLAIVVGGGNIFRGLKGSAAGMDRATADYVGMLATVMNAITLQDGLERAGVPTRVQTAIAMQEVAEPYIRRKAMRHLEKGRVVVFGAGCGNPFFTTDTTAALRAAEINADVVFKATKVDGVYDKDPAKHPDAVKHDHLSYQDVLSGELGVMDATAISLCKENNIPIVVFDLFEPGNIGKAVAGEPIGSRIGNPV.

Position 9–12 (9–12 (KLSG)) interacts with ATP. Positions 17–22 (GSQGYG) are involved in allosteric activation by GTP. Gly51 serves as a coordination point for UMP. ATP is bound by residues Gly52 and Arg56. UMP is bound by residues Asp71 and 132 to 139 (CGNPFFTT). Thr159, Tyr165, and Asp168 together coordinate ATP.

It belongs to the UMP kinase family. As to quaternary structure, homohexamer.

It is found in the cytoplasm. The enzyme catalyses UMP + ATP = UDP + ADP. The protein operates within pyrimidine metabolism; CTP biosynthesis via de novo pathway; UDP from UMP (UMPK route): step 1/1. Its activity is regulated as follows. Allosterically activated by GTP. Inhibited by UTP. In terms of biological role, catalyzes the reversible phosphorylation of UMP to UDP. This chain is Uridylate kinase, found in Synechococcus sp. (strain CC9902).